The primary structure comprises 76 residues: Translational regulator CsrA (76 aa).

It belongs to the CsrA/RsmA family. Homodimer; the beta-strands of each monomer intercalate to form a hydrophobic core, while the alpha-helices form wings that extend away from the core.

It is found in the cytoplasm. Its function is as follows. A translational regulator that binds mRNA to regulate translation initiation and/or mRNA stability. Usually binds in the 5'-UTR at or near the Shine-Dalgarno sequence preventing ribosome-binding, thus repressing translation. Its main target seems to be the major flagellin gene, while its function is anatagonized by FliW. This chain is Translational regulator CsrA, found in Syntrophomonas wolfei subsp. wolfei (strain DSM 2245B / Goettingen).